The following is a 150-amino-acid chain: Avidin-related protein 6 (150 aa).

The first 24 residues, 1-24, serve as a signal peptide directing secretion; sequence MVHATSPLLLLLLLSLALVAPGLS. Residues 26-147 enclose the Avidin-like domain; the sequence is RKCSLTGEWD…GYNNFTRQRT (122 aa). A disulfide bond links Cys-28 and Cys-105. Biotin is bound by residues Asn-36 and Ser-40. Residue Asn-54 is glycosylated (N-linked (GlcNAc...) asparagine). Positions 57, 59, and 63 each coordinate biotin. Asn-93 is a glycosylation site (N-linked (GlcNAc...) asparagine). Ser-95, Ser-99, and Asn-140 together coordinate biotin. N-linked (GlcNAc...) asparagine glycosylation is present at Asn-141.

It belongs to the avidin/streptavidin family. In terms of assembly, homotetramer. Glycosylated.

The protein localises to the secreted. Functionally, forms a strong non-covalent specific complex with biotin. The protein is Avidin-related protein 6 (AVR6) of Gallus gallus (Chicken).